A 494-amino-acid chain; its full sequence is Neuronal pentraxin receptor (494 aa).

Over 1-2 (MK) the chain is Cytoplasmic. Residues 3-23 (FLAVLLAAGMLAFLGAVICII) traverse the membrane as a helical; Signal-anchor for type II membrane protein segment. The Extracellular portion of the chain corresponds to 24 to 494 (ASVPLAASPA…FDVCKRRAKA (471 aa)). Residues 37 to 80 (PGGTDNASAASAAGAPGPQRSLSALQGAGGSAGPSVLPGEPAAS) form a disordered region. An N-linked (GlcNAc...) asparagine glycan is attached at Asn-42. Composition is skewed to low complexity over residues 43–62 (ASAA…SALQ) and 69–80 (GPSVLPGEPAAS). A glycan (N-linked (GlcNAc...) asparagine) is linked at Asn-211. A Pentraxin (PTX) domain is found at 286 to 488 (DAFKVSIPIR…GAKKAAFDVC (203 aa)). Cys-316 and Cys-377 are disulfide-bonded. Residues Asn-341, Glu-419, Gln-420, Asp-421, and Gln-431 each coordinate Ca(2+). Residue Asn-457 is glycosylated (N-linked (GlcNAc...) asparagine).

As to quaternary structure, interacts with KLHL2. Heteropentamer with NPTX1 and/or NPTX2. Also binds taipoxin-associated calcium-binding protein 49 (TCBP49/RCN2). Ca(2+) serves as cofactor. Post-translationally, N-glycosylated. Ubiquitinated by a cullin-RING-based BCR (BTB-CUL3-RBX1) E3 ubiquitin-protein ligase complex containing KLHL2. As to expression, brain specific.

It is found in the membrane. May be involved in mediating uptake of synaptic material during synapse remodeling or in mediating the synaptic clustering of AMPA glutamate receptors at a subset of excitatory synapses. This Rattus norvegicus (Rat) protein is Neuronal pentraxin receptor (Nptxr).